The following is a 354-amino-acid chain: Small ribosomal subunit biogenesis GTPase RsgA (354 aa).

Positions 1 to 46 (MSKKKPLSQGQLRRMRANHEKRLNRDSGDKNTPELQDSSLGPEQSG) are disordered. A compositionally biased stretch (basic and acidic residues) spans 17 to 32 (ANHEKRLNRDSGDKNT). Residues 33–46 (PELQDSSLGPEQSG) show a composition bias toward polar residues. Residues 108 to 276 (HSSLSRPDLY…LIDSPGVREF (169 aa)) enclose the CP-type G domain. Residues 164–167 (NKID) and 218–226 (GQSGVGKSS) contribute to the GTP site. Cys-300, Cys-305, His-307, and Cys-313 together coordinate Zn(2+).

It belongs to the TRAFAC class YlqF/YawG GTPase family. RsgA subfamily. In terms of assembly, monomer. Associates with 30S ribosomal subunit, binds 16S rRNA. The cofactor is Zn(2+).

It localises to the cytoplasm. One of several proteins that assist in the late maturation steps of the functional core of the 30S ribosomal subunit. Helps release RbfA from mature subunits. May play a role in the assembly of ribosomal proteins into the subunit. Circularly permuted GTPase that catalyzes slow GTP hydrolysis, GTPase activity is stimulated by the 30S ribosomal subunit. This chain is Small ribosomal subunit biogenesis GTPase RsgA, found in Shewanella oneidensis (strain ATCC 700550 / JCM 31522 / CIP 106686 / LMG 19005 / NCIMB 14063 / MR-1).